Here is an 894-residue protein sequence, read N- to C-terminus: Protein translocase subunit SecA (894 aa).

ATP-binding positions include Q87, 105 to 109 (GEGKT), and D512. Positions 836–870 (EVEQAERERQAHAEQESSHYHAEGEGQDFSDLHIG) are disordered. Residues C875, C877, C886, and H887 each coordinate Zn(2+).

It belongs to the SecA family. Monomer and homodimer. Part of the essential Sec protein translocation apparatus which comprises SecA, SecYEG and auxiliary proteins SecDF-YajC and YidC. It depends on Zn(2+) as a cofactor.

The protein localises to the cell inner membrane. Its subcellular location is the cytoplasm. It carries out the reaction ATP + H2O + cellular proteinSide 1 = ADP + phosphate + cellular proteinSide 2.. Functionally, part of the Sec protein translocase complex. Interacts with the SecYEG preprotein conducting channel. Has a central role in coupling the hydrolysis of ATP to the transfer of proteins into and across the cell membrane, serving both as a receptor for the preprotein-SecB complex and as an ATP-driven molecular motor driving the stepwise translocation of polypeptide chains across the membrane. The sequence is that of Protein translocase subunit SecA from Glaesserella parasuis serovar 5 (strain SH0165) (Haemophilus parasuis).